The primary structure comprises 873 residues: Tyrosine-protein kinase receptor TYRO3 (873 aa).

The N-terminal stretch at 1-28 (MELRRSMALPRLLLLGLWAAALRDGAVA) is a signal peptide. 2 consecutive Ig-like C2-type domains span residues 29 to 116 (AGMK…KEES) and 127 to 208 (PYFT…ATVQ). At 29 to 416 (AGMKFTGSPI…QRQPPYGTSW (388 aa)) the chain is on the extracellular side. An N-linked (GlcNAc...) asparagine glycan is attached at N51. 2 disulfide bridges follow: C52/C105 and C148/C191. Residues N179, N184, N218, N228, N281, N353, and N367 are each glycosylated (N-linked (GlcNAc...) asparagine). Fibronectin type-III domains lie at 215–308 (PPLN…TLEL) and 310–403 (PSST…AQEV). The chain crosses the membrane as a helical span at residues 417–437 (VPVALGILTALVTAVALALIL). Over 438–873 (LRKRRKETRF…ELETEGEKSC (436 aa)) the chain is Cytoplasmic. Positions 505–776 (FTLGRMLGKG…GVLRSQLEMI (272 aa)) constitute a Protein kinase domain. Residues 511 to 519 (LGKGEFGSV) and K537 each bind ATP. Catalysis depends on D642, which acts as the Proton acceptor. The residue at position 673 (Y673) is a Phosphotyrosine; by autocatalysis. The interval 845 to 873 (VEGERHPEGQEGENKSLLYELETEGEKSC) is disordered. The span at 847 to 858 (GERHPEGQEGEN) shows a compositional bias: basic and acidic residues.

It belongs to the protein kinase superfamily. Tyr protein kinase family. AXL/UFO subfamily. In terms of processing, autophosphorylated on tyrosine residues. As to expression, detected in embryonic retina (at protein level). detected in brain, retina, kidney and in retinal Mueller glia-like cells.

The protein localises to the cell membrane. The enzyme catalyses L-tyrosyl-[protein] + ATP = O-phospho-L-tyrosyl-[protein] + ADP + H(+). Its function is as follows. Receptor tyrosine kinase that transduces signals from the extracellular matrix into the cytoplasm by binding to several ligands. Regulates many physiological processes including cell survival, migration and differentiation. Ligand binding at the cell surface induces dimerization and autophosphorylation of TYRO3 on its intracellular domain that provides docking sites for downstream signaling molecules. Following activation by ligand, enhances PI3-kinase activity and activates the AKT survival pathway, including nuclear translocation of NF-kappa-B and up-regulation of transcription of NF-kappa-B-regulated genes. The protein is Tyrosine-protein kinase receptor TYRO3 (TYRO3) of Gallus gallus (Chicken).